We begin with the raw amino-acid sequence, 120 residues long: Large ribosomal subunit protein bL19 (120 aa).

Belongs to the bacterial ribosomal protein bL19 family.

Functionally, this protein is located at the 30S-50S ribosomal subunit interface and may play a role in the structure and function of the aminoacyl-tRNA binding site. This chain is Large ribosomal subunit protein bL19, found in Geobacillus kaustophilus (strain HTA426).